Here is a 7214-residue protein sequence, read N- to C-terminus: Nonribosomal peptide synthetase atnA (7214 aa).

The tract at residues 257–651 is adenylation 1; the sequence is ERKALEQPHA…VGRKDTQVKI (395 aa). The Carrier 1 domain occupies 786–862; that stretch reads EPVTETEKAV…AMSQIAVELS (77 aa). S823 is subject to O-(pantetheine 4'-phosphoryl)serine. A condensation 1 region spans residues 899–1318; that stretch reads EDAYPATALQ…LVSQKDYTQI (420 aa). The adenylation 2 stretch occupies residues 1340–1735; sequence QVLATPDAPA…ARKDTQAKVR (396 aa). The region spanning 1877–1953 is the Carrier 2 domain; the sequence is QPTSDIEKKV…ALAGRAQYIE (77 aa). S1914 carries the O-(pantetheine 4'-phosphoryl)serine modification. Residues 1962 to 2384 form an epimerization region; sequence PEAEVIDEWF…RQVLETGIDE (423 aa). A condensation 2 region spans residues 2431-2845; it reads SPCSPMQLGL…MLSPLDRASL (415 aa). An adenylation 3 region spans residues 2866-3262; that stretch reads QNARKRPHAL…VGRKDTQVKV (397 aa). Positions 3398–3472 constitute a Carrier 3 domain; the sequence is ALETPMEETI…DMARIVVAAY (75 aa). S3433 carries the post-translational modification O-(pantetheine 4'-phosphoryl)serine. Residues 3510 to 3904 form a condensation 3 region; the sequence is VEDVYPSTSL…QLCENEDGRL (395 aa). Residues 3943–4339 are adenylation 4; that stretch reads ERARLHPDLL…VGRKDSQVKL (397 aa). The region spanning 4476-4552 is the Carrier 4 domain; sequence VPGSEAEKVI…ELAGRVTSIS (77 aa). O-(pantetheine 4'-phosphoryl)serine is present on S4513. The condensation 4 stretch occupies residues 4601-5033; the sequence is VEDVYPCSPL…TSAAMRAQLL (433 aa). Residues 5051–5446 are adenylation 5; the sequence is FHRTALRYPE…VGRKDTQIKF (396 aa). The interval 5489–5515 is disordered; that stretch reads FITTEGGSGHENKGSPSLKGSSGDPVS. Positions 5591–5667 constitute a Carrier 5 domain; that stretch reads APRTAMEKRL…QMANIVARNA (77 aa). Residue S5628 is modified to O-(pantetheine 4'-phosphoryl)serine. Residues 5707–6123 are condensation 5; the sequence is QDVYPCTPLQ…HLLGDNEIKM (417 aa). Residues 6145-6543 are adenylation 6; sequence ERAVLQPEAI…GRKDTQIKLR (399 aa). Residues 6683-6766 enclose the Carrier 6 domain; that stretch reads DPADKLALAL…DVARMIEHGN (84 aa). S6725 is subject to O-(pantetheine 4'-phosphoryl)serine. The segment at 6814-7194 is thioesterase (TE) domain; that stretch reads ILLTGATGFL…KSISYMRQIG (381 aa). Residues 6895–6915 are disordered; it reads STVEGRDHPGSESGSTAGPAE.

This sequence belongs to the NRP synthetase family.

The protein operates within secondary metabolite biosynthesis. Nonribosomal peptide synthetase; part of the gene cluster that mediates the biosynthesis of aspercryptins, linear lipopeptides built from six amino acids including 2 highly unusual and nonproteogenic amino acids, 2-amino-octanoic acid (2aoa) and 2-amino-dodecanol (2adol). The core structure of aspercryptins is as follows: Ser/Ala-Thr-Ile/Val-2aoa-Asn-2adol. The first step of aspercryptin biosynthesis is the generation of the fatty acid precursors, octanoic and dodecanoic acids, by the FAS subunits atnF and atnM. The fatty acid precursors are likely transformed into the corresponding alpha-amino fatty acids in three steps. First, they are hydroxylated by the cytochrome P450 monooxygenase atnE, then oxidized to the corresponding alpha-keto acids by the NAD(P)-dependent oxidoreductase atnD, and finally converted to the alpha-amino fatty acids by the PLP-dependent aminotransferases atnH or atnJ. the alpha-amino fatty acids, 2-amino-octanoic and 2-amino-dodecanoic acids, are recognized, activated, and covalently tethered to the NRPS atnA by its fourth and sixth adenylation domains. The second module of atnA is the Thr module and contains an epimerase (E) domain responsible for the epimerization of Thr to D-allo-Thr. Additionally, despite atnA having only one epimerase domain, the first amino acid of aspercryptin A1 is D-Ser, suggesting that serine is either loaded directly as D-Ser on the first module or that the epimerase domain in the threonine module epimerizes both L-Ser and L-Thr. After condensation of the hexapeptide of aspercryptin, the C-terminal reductase (TE) domain might be involved in the reductive release and production of the aldehyde hexapeptide. Further reduction would generate aspercryptins. The variety of aspercryptins produced reflects the flexibility of the atnA NRPS, allowing incorporation of alanine instead of serine, valine for isoleucine, and a C10 fatty amino alcohol instead of the C12 version. AtnB seems to be involved in the selectivity for Ile versus Val by the third module. Moreover, type B, C and D aspercryptins have an additional N-terminal cichorine, acetyl and propionyl group respectively. This Emericella nidulans (strain FGSC A4 / ATCC 38163 / CBS 112.46 / NRRL 194 / M139) (Aspergillus nidulans) protein is Nonribosomal peptide synthetase atnA.